A 341-amino-acid chain; its full sequence is Anthranilate phosphoribosyltransferase (341 aa).

5-phospho-alpha-D-ribose 1-diphosphate contacts are provided by residues Gly-79, 82-83 (GD), Thr-87, 89-92 (NIST), 107-115 (KHGNRAVSS), and Ser-119. Gly-79 lines the anthranilate pocket. Ser-91 lines the Mg(2+) pocket. An anthranilate-binding site is contributed by Asn-110. Arg-165 serves as a coordination point for anthranilate. Positions 224 and 225 each coordinate Mg(2+).

It belongs to the anthranilate phosphoribosyltransferase family. As to quaternary structure, homodimer. Mg(2+) serves as cofactor.

The catalysed reaction is N-(5-phospho-beta-D-ribosyl)anthranilate + diphosphate = 5-phospho-alpha-D-ribose 1-diphosphate + anthranilate. Its pathway is amino-acid biosynthesis; L-tryptophan biosynthesis; L-tryptophan from chorismate: step 2/5. Catalyzes the transfer of the phosphoribosyl group of 5-phosphorylribose-1-pyrophosphate (PRPP) to anthranilate to yield N-(5'-phosphoribosyl)-anthranilate (PRA). The sequence is that of Anthranilate phosphoribosyltransferase from Bacillus mycoides (strain KBAB4) (Bacillus weihenstephanensis).